The chain runs to 168 residues: Segregation and condensation protein B (168 aa).

Belongs to the ScpB family. Homodimer. Homodimerization may be required to stabilize the binding of ScpA to the Smc head domains. Component of a cohesin-like complex composed of ScpA, ScpB and the Smc homodimer, in which ScpA and ScpB bind to the head domain of Smc. The presence of the three proteins is required for the association of the complex with DNA.

Its subcellular location is the cytoplasm. In terms of biological role, participates in chromosomal partition during cell division. May act via the formation of a condensin-like complex containing Smc and ScpA that pull DNA away from mid-cell into both cell halves. This is Segregation and condensation protein B from Caldanaerobacter subterraneus subsp. tengcongensis (strain DSM 15242 / JCM 11007 / NBRC 100824 / MB4) (Thermoanaerobacter tengcongensis).